Consider the following 415-residue polypeptide: Multifunctional CCA protein (415 aa).

The ATP site is built by glycine 8 and arginine 11. Residues glycine 8 and arginine 11 each coordinate CTP. Residues aspartate 21 and aspartate 23 each coordinate Mg(2+). Positions 91, 143, and 146 each coordinate ATP. CTP contacts are provided by arginine 91, arginine 143, and arginine 146. The 102-residue stretch at 232–333 (TGVHVMMVID…TRLLERCDAL (102 aa)) folds into the HD domain.

Belongs to the tRNA nucleotidyltransferase/poly(A) polymerase family. Bacterial CCA-adding enzyme type 1 subfamily. Monomer. Can also form homodimers and oligomers. It depends on Mg(2+) as a cofactor. Ni(2+) is required as a cofactor.

The catalysed reaction is a tRNA precursor + 2 CTP + ATP = a tRNA with a 3' CCA end + 3 diphosphate. It catalyses the reaction a tRNA with a 3' CCA end + 2 CTP + ATP = a tRNA with a 3' CCACCA end + 3 diphosphate. Functionally, catalyzes the addition and repair of the essential 3'-terminal CCA sequence in tRNAs without using a nucleic acid template. Adds these three nucleotides in the order of C, C, and A to the tRNA nucleotide-73, using CTP and ATP as substrates and producing inorganic pyrophosphate. tRNA 3'-terminal CCA addition is required both for tRNA processing and repair. Also involved in tRNA surveillance by mediating tandem CCA addition to generate a CCACCA at the 3' terminus of unstable tRNAs. While stable tRNAs receive only 3'-terminal CCA, unstable tRNAs are marked with CCACCA and rapidly degraded. The sequence is that of Multifunctional CCA protein from Cupriavidus pinatubonensis (strain JMP 134 / LMG 1197) (Cupriavidus necator (strain JMP 134)).